Here is a 144-residue protein sequence, read N- to C-terminus: Protein CT_635 (144 aa).

Residues 110–144 (EVTNDIGHSSHKSPTPKKTKSSSQKKSKKKNWIPL) form a disordered region. Basic residues predominate over residues 118-144 (SSHKSPTPKKTKSSSQKKSKKKNWIPL).

It belongs to the chlamydial CPn_0742/CT_635/TC_0003 family.

The chain is Protein CT_635 from Chlamydia trachomatis serovar D (strain ATCC VR-885 / DSM 19411 / UW-3/Cx).